A 405-amino-acid chain; its full sequence is Arginine biosynthesis bifunctional protein ArgJ (405 aa).

Residues Thr-152, Lys-178, Thr-189, Glu-276, Asn-400, and Thr-405 each contribute to the substrate site. Catalysis depends on Thr-189, which acts as the Nucleophile.

The protein belongs to the ArgJ family. As to quaternary structure, heterotetramer of two alpha and two beta chains.

It is found in the cytoplasm. The catalysed reaction is N(2)-acetyl-L-ornithine + L-glutamate = N-acetyl-L-glutamate + L-ornithine. It carries out the reaction L-glutamate + acetyl-CoA = N-acetyl-L-glutamate + CoA + H(+). The protein operates within amino-acid biosynthesis; L-arginine biosynthesis; L-ornithine and N-acetyl-L-glutamate from L-glutamate and N(2)-acetyl-L-ornithine (cyclic): step 1/1. It functions in the pathway amino-acid biosynthesis; L-arginine biosynthesis; N(2)-acetyl-L-ornithine from L-glutamate: step 1/4. Its function is as follows. Catalyzes two activities which are involved in the cyclic version of arginine biosynthesis: the synthesis of N-acetylglutamate from glutamate and acetyl-CoA as the acetyl donor, and of ornithine by transacetylation between N(2)-acetylornithine and glutamate. This Pseudomonas syringae pv. syringae (strain B728a) protein is Arginine biosynthesis bifunctional protein ArgJ.